The primary structure comprises 368 residues: S-adenosylmethionine decarboxylase proenzyme 1 (368 aa).

Residues Glu-9 and Arg-12 contribute to the active site. Ser-69 (schiff-base intermediate with substrate; via pyruvic acid) is an active-site residue. At Ser-69 the chain carries Pyruvic acid (Ser); by autocatalysis. Cys-83 functions as the Proton donor; for catalytic activity in the catalytic mechanism. Catalysis depends on proton acceptor; for processing activity residues Ser-234 and His-247.

The protein belongs to the eukaryotic AdoMetDC family. Pyruvate is required as a cofactor. Is synthesized initially as an inactive proenzyme. Formation of the active enzyme involves a self-maturation process in which the active site pyruvoyl group is generated from an internal serine residue via an autocatalytic post-translational modification. Two non-identical subunits are generated from the proenzyme in this reaction, and the pyruvate is formed at the N-terminus of the alpha chain, which is derived from the carboxyl end of the proenzyme. The post-translation cleavage follows an unusual pathway, termed non-hydrolytic serinolysis, in which the side chain hydroxyl group of the serine supplies its oxygen atom to form the C-terminus of the beta chain, while the remainder of the serine residue undergoes an oxidative deamination to produce ammonia and the pyruvoyl group blocking the N-terminus of the alpha chain.

The enzyme catalyses S-adenosyl-L-methionine + H(+) = S-adenosyl 3-(methylsulfanyl)propylamine + CO2. Its pathway is amine and polyamine biosynthesis; S-adenosylmethioninamine biosynthesis; S-adenosylmethioninamine from S-adenosyl-L-methionine: step 1/1. This Brassica juncea (Indian mustard) protein is S-adenosylmethionine decarboxylase proenzyme 1 (SAMDC1).